A 46-amino-acid chain; its full sequence is Diuretic hormone (46 aa).

An Isoleucine amide modification is found at I46.

This sequence belongs to the sauvagine/corticotropin-releasing factor/urotensin I family.

It is found in the secreted. In terms of biological role, regulation of fluid secretion. Stimulates primary urine secretion by Malpighian tubules and causes a dose-dependent stimulation of cAMP levels in the tubules. The protein is Diuretic hormone of Locusta migratoria (Migratory locust).